The primary structure comprises 1133 residues: Protein cordon-bleu (1133 aa).

Pro residues predominate over residues methionine 1–lysine 11. The interval methionine 1–histidine 25 is disordered. A phosphoserine mark is found at serine 31, serine 34, serine 196, serine 219, serine 256, and serine 278. Disordered regions lie at residues alanine 246–glycine 393 and glutamine 442–serine 568. The span at cysteine 272–serine 301 shows a compositional bias: polar residues. Residues lysine 307–proline 312 carry the KKRRAP 1 motif. A phosphoserine mark is found at serine 330 and serine 333. The KKRRAP 2 signature appears at lysine 340 to proline 345. Pro residues predominate over residues proline 345 to valine 358. The residue at position 356 (serine 356) is a Phosphoserine. Over residues asparagine 361 to lysine 371 the composition is skewed to basic and acidic residues. 2 stretches are compositionally biased toward polar residues: residues threonine 382–glycine 393 and glutamine 442–isoleucine 464. Position 447 is a phosphoserine (serine 447). Basic and acidic residues predominate over residues serine 512–methionine 524. Position 614 is a phosphoserine (serine 614). The disordered stretch occupies residues alanine 664–valine 720. 2 stretches are compositionally biased toward polar residues: residues proline 665–glutamate 674 and threonine 686–serine 696. Position 924 is a phosphoserine (serine 924). 2 disordered regions span residues proline 942–phenylalanine 961 and histidine 990–alanine 1018. WH2 domains lie at leucine 981–threonine 1001 and glutamate 1021–valine 1041. Positions glycine 993–proline 1010 are enriched in basic and acidic residues. The interval aspartate 1063–alanine 1091 is disordered. Residues leucine 1072–threonine 1083 show a composition bias toward pro residues. At serine 1099 the chain carries Phosphoserine. The region spanning alanine 1109–valine 1129 is the WH2 3 domain.

In terms of assembly, identified in a complex composed of ACTA1, COBL, GSN AND TMSB4X. Identified in a complex composed of COBL, PACSIN1 and WASL. Interacts with PACSIN1, PACSIN2 and PACSIN3. Interacts (via WH2 domains) with actin monomers. Interacts with both PACSIN1 and DBNL. In terms of tissue distribution, detected in brain (at protein level).

The protein resides in the cell membrane. Its subcellular location is the cytoplasm. The protein localises to the cytoskeleton. It is found in the cell projection. It localises to the ruffle. The protein resides in the cytosol. Plays an important role in the reorganization of the actin cytoskeleton. Binds to and sequesters actin monomers (G actin). Nucleates actin polymerization by assembling three actin monomers in cross-filament orientation and thereby promotes growth of actin filaments at the barbed end. Can also mediate actin depolymerization at barbed ends and severing of actin filaments. Promotes formation of cell ruffles. Regulates dendrite branching in Purkinje cells. Regulates neuron morphogenesis and increases branching of axons and dendrites. This is Protein cordon-bleu (Cobl) from Rattus norvegicus (Rat).